Consider the following 139-residue polypeptide: Large-conductance mechanosensitive channel (139 aa).

Transmembrane regions (helical) follow at residues 14-34 (VIDLAVGVIVGAAFTAIINSL) and 81-101 (GSFLTAVINFLLIAFVVFMIV).

Belongs to the MscL family. As to quaternary structure, homopentamer.

It is found in the cell membrane. Functionally, channel that opens in response to stretch forces in the membrane lipid bilayer. May participate in the regulation of osmotic pressure changes within the cell. In Chloroflexus aurantiacus (strain ATCC 29366 / DSM 635 / J-10-fl), this protein is Large-conductance mechanosensitive channel.